Reading from the N-terminus, the 131-residue chain is D-ribose pyranase (131 aa).

His20 functions as the Proton donor in the catalytic mechanism. Residues Asp28, His98, and 120–122 (YAN) each bind substrate.

Belongs to the RbsD / FucU family. RbsD subfamily. In terms of assembly, homodecamer.

The protein localises to the cytoplasm. It carries out the reaction beta-D-ribopyranose = beta-D-ribofuranose. Its pathway is carbohydrate metabolism; D-ribose degradation; D-ribose 5-phosphate from beta-D-ribopyranose: step 1/2. Functionally, catalyzes the interconversion of beta-pyran and beta-furan forms of D-ribose. The polypeptide is D-ribose pyranase (Bacillus licheniformis (strain ATCC 14580 / DSM 13 / JCM 2505 / CCUG 7422 / NBRC 12200 / NCIMB 9375 / NCTC 10341 / NRRL NRS-1264 / Gibson 46)).